A 463-amino-acid polypeptide reads, in one-letter code: Mitochondrial dynamics protein MID51 (463 aa).

Residues 1-23 are Mitochondrial intermembrane-facing; the sequence is MAGAGERKGKKDDNGIGTAIDFV. A helical membrane pass occupies residues 24–46; that stretch reads LSNARLVLGVGGAAMLGIATLAV. Over 47–463 the chain is Cytoplasmic; sequence KRMYDRAISA…LSEPEVLLQT (417 aa). Residues 49 to 195 form a dimerization region; the sequence is MYDRAISAPT…LSGSLYDDLQ (147 aa). Phosphoserine is present on residues Ser-55, Ser-59, Ser-79, and Ser-94. A disordered region spans residues 57 to 79; that stretch reads PTSPTRLSHSGKRSWEEPNWMGS. The segment at 104-123 is disordered; sequence AFDTDTFCPPRPKPVARKGQ. The segment at 160 to 169 is important for interaction with DNM1L; it reads AAVDICAELR. Residues Ser-187, Ser-189, and His-201 each coordinate ADP. The segment at 234–243 is important for interaction with DNM1L; it reads RRENPEYFPR. ADP is bound by residues Ser-340, Arg-342, and Lys-368.

It belongs to the MID49/MID51 family. In terms of assembly, homodimer. Interacts with DNM1L.

It is found in the mitochondrion outer membrane. In terms of biological role, mitochondrial outer membrane protein which regulates mitochondrial fission/fusion dynamics. Promotes the recruitment and association of the fission mediator dynamin-related protein 1 (DNM1L) to the mitochondrial surface independently of the mitochondrial fission FIS1 and MFF proteins. Regulates DNM1L GTPase activity and DNM1L oligomerization. Binds ADP and can also bind GDP, although with lower affinity. Does not bind CDP, UDP, ATP, AMP or GTP. Inhibits DNM1L GTPase activity in the absence of bound ADP. Requires ADP to stimulate DNM1L GTPase activity and the assembly of DNM1L into long, oligomeric tubules with a spiral pattern, as opposed to the ring-like DNM1L oligomers observed in the absence of bound ADP. Does not require ADP for its function in recruiting DNM1L. This is Mitochondrial dynamics protein MID51 (MIEF1) from Pongo abelii (Sumatran orangutan).